A 245-amino-acid polypeptide reads, in one-letter code: Biosynthetic peptidoglycan transglycosylase (245 aa).

Residues 19 to 39 (IVYAGAVFAAAWLATQLFYFV) traverse the membrane as a helical segment.

This sequence belongs to the glycosyltransferase 51 family.

It is found in the cell inner membrane. The catalysed reaction is [GlcNAc-(1-&gt;4)-Mur2Ac(oyl-L-Ala-gamma-D-Glu-L-Lys-D-Ala-D-Ala)](n)-di-trans,octa-cis-undecaprenyl diphosphate + beta-D-GlcNAc-(1-&gt;4)-Mur2Ac(oyl-L-Ala-gamma-D-Glu-L-Lys-D-Ala-D-Ala)-di-trans,octa-cis-undecaprenyl diphosphate = [GlcNAc-(1-&gt;4)-Mur2Ac(oyl-L-Ala-gamma-D-Glu-L-Lys-D-Ala-D-Ala)](n+1)-di-trans,octa-cis-undecaprenyl diphosphate + di-trans,octa-cis-undecaprenyl diphosphate + H(+). It participates in cell wall biogenesis; peptidoglycan biosynthesis. Its function is as follows. Peptidoglycan polymerase that catalyzes glycan chain elongation from lipid-linked precursors. The chain is Biosynthetic peptidoglycan transglycosylase from Burkholderia multivorans (strain ATCC 17616 / 249).